Here is a 115-residue protein sequence, read N- to C-terminus: V-type proton ATPase subunit G (115 aa).

Belongs to the V-ATPase G subunit family. As to quaternary structure, V-ATPase is a heteromultimeric enzyme composed of a peripheral catalytic V1 complex (components A to H) attached to an integral membrane V0 proton pore complex (components: a, c, c', c'', d, e, f and VOA1).

The protein resides in the vacuole membrane. Functionally, subunit of the V1 complex of vacuolar(H+)-ATPase (V-ATPase), a multisubunit enzyme composed of a peripheral complex (V1) that hydrolyzes ATP and a membrane integral complex (V0) that translocates protons. V-ATPase is responsible for acidifying and maintaining the pH of intracellular compartments. This chain is V-type proton ATPase subunit G (vma-10), found in Neurospora crassa (strain ATCC 24698 / 74-OR23-1A / CBS 708.71 / DSM 1257 / FGSC 987).